The chain runs to 293 residues: MFQHTVKAPALFAGVGVHTGAYTRVAVRPAAADTGIVFVRTDVSGSDNRIAVSPEAVCKTQLGTVVGNAAGVTVSTIEHLMAALVMLGVDNAVVEVDGPEMPIMDGSALPFVRVLDRAGRREQQAPRRYIEILAPVEVIDGDKRAALRPAEAFEVAFEIRFGSQAIGTQAIDLPMDEAAFRDELADCRTFGFLHEVEALRAMGLARGGSMENAVVIDGDRILNPEGLRRPDEFVRHKALDAIGDLFVLGAPVVGRFEGVLAGHGLNNALVRALAARPDAWRVRTFAEDLAEAV.

Zn(2+) contacts are provided by H79, H236, and D240. Residue H263 is the Proton donor of the active site.

The protein belongs to the LpxC family. Zn(2+) serves as cofactor.

The catalysed reaction is a UDP-3-O-[(3R)-3-hydroxyacyl]-N-acetyl-alpha-D-glucosamine + H2O = a UDP-3-O-[(3R)-3-hydroxyacyl]-alpha-D-glucosamine + acetate. It functions in the pathway glycolipid biosynthesis; lipid IV(A) biosynthesis; lipid IV(A) from (3R)-3-hydroxytetradecanoyl-[acyl-carrier-protein] and UDP-N-acetyl-alpha-D-glucosamine: step 2/6. Its function is as follows. Catalyzes the hydrolysis of UDP-3-O-myristoyl-N-acetylglucosamine to form UDP-3-O-myristoylglucosamine and acetate, the committed step in lipid A biosynthesis. The chain is UDP-3-O-acyl-N-acetylglucosamine deacetylase from Phenylobacterium zucineum (strain HLK1).